The primary structure comprises 240 residues: Uridylate kinase (240 aa).

An ATP-binding site is contributed by 12-15 (KLSG). Residues 20-25 (GDKGFG) form an involved in allosteric activation by GTP region. UMP is bound at residue Gly-54. 2 residues coordinate ATP: Gly-55 and Arg-59. Residues Asp-74 and 135–142 (TGSPYFST) each bind UMP. Residues Asn-163, Tyr-169, and Asp-172 each contribute to the ATP site.

Belongs to the UMP kinase family. In terms of assembly, homohexamer.

It localises to the cytoplasm. The catalysed reaction is UMP + ATP = UDP + ADP. Its pathway is pyrimidine metabolism; CTP biosynthesis via de novo pathway; UDP from UMP (UMPK route): step 1/1. Its activity is regulated as follows. Allosterically activated by GTP. Inhibited by UTP. Its function is as follows. Catalyzes the reversible phosphorylation of UMP to UDP. The protein is Uridylate kinase of Levilactobacillus brevis (strain ATCC 367 / BCRC 12310 / CIP 105137 / JCM 1170 / LMG 11437 / NCIMB 947 / NCTC 947) (Lactobacillus brevis).